A 549-amino-acid polypeptide reads, in one-letter code: Oxygen-dependent choline dehydrogenase (549 aa).

FAD is bound at residue 4–33 (DFVIIGSGSAGSALAYRLSEDGANSVVVLE). Residue His465 is the Proton acceptor of the active site.

This sequence belongs to the GMC oxidoreductase family. Requires FAD as cofactor.

The enzyme catalyses choline + A = betaine aldehyde + AH2. It catalyses the reaction betaine aldehyde + NAD(+) + H2O = glycine betaine + NADH + 2 H(+). Its pathway is amine and polyamine biosynthesis; betaine biosynthesis via choline pathway; betaine aldehyde from choline (cytochrome c reductase route): step 1/1. Involved in the biosynthesis of the osmoprotectant glycine betaine. Catalyzes the oxidation of choline to betaine aldehyde and betaine aldehyde to glycine betaine at the same rate. This chain is Oxygen-dependent choline dehydrogenase, found in Sinorhizobium medicae (strain WSM419) (Ensifer medicae).